The sequence spans 521 residues: GMP synthase [glutamine-hydrolyzing] (521 aa).

The Glutamine amidotransferase type-1 domain maps to 5-203; it reads KILILDFGSQ…VHEICGCGND (199 aa). Cysteine 82 functions as the Nucleophile in the catalytic mechanism. Active-site residues include histidine 177 and glutamate 179. Residues 204–396 form the GMPS ATP-PPase domain; sequence WNMPDYISEA…LGLPHDMVYR (193 aa). 231-237 provides a ligand contact to ATP; sequence SGGVDSS.

As to quaternary structure, homodimer.

The catalysed reaction is XMP + L-glutamine + ATP + H2O = GMP + L-glutamate + AMP + diphosphate + 2 H(+). Its pathway is purine metabolism; GMP biosynthesis; GMP from XMP (L-Gln route): step 1/1. Functionally, catalyzes the synthesis of GMP from XMP. The sequence is that of GMP synthase [glutamine-hydrolyzing] from Azoarcus sp. (strain BH72).